Consider the following 155-residue polypeptide: Probable adenylyl-sulfate kinase (155 aa).

Position 9–16 (9–16) interacts with ATP; sequence GPSGAGKT. Residue Ser-83 is the Phosphoserine intermediate of the active site. Residues 134 to 155 are disordered; sequence LDGEYEEPENPEVVVDTDKNDR.

Belongs to the APS kinase family.

The catalysed reaction is adenosine 5'-phosphosulfate + ATP = 3'-phosphoadenylyl sulfate + ADP + H(+). The protein operates within sulfur metabolism; hydrogen sulfide biosynthesis; sulfite from sulfate: step 2/3. Catalyzes the synthesis of activated sulfate. The polypeptide is Probable adenylyl-sulfate kinase (cysC) (Archaeoglobus fulgidus (strain ATCC 49558 / DSM 4304 / JCM 9628 / NBRC 100126 / VC-16)).